A 359-amino-acid polypeptide reads, in one-letter code: (2E,6E)-farnesyl diphosphate synthase (359 aa).

The tract at residues 1–21 is disordered; it reads MRGTDEKYGLPPQPDSDRMTR. K73, R76, and H105 together coordinate isopentenyl diphosphate. Mg(2+)-binding residues include D112 and D116. Residues 112-116 carry the DDXXD motif motif; the sequence is DDLMD. R121 is a (2E)-geranyl diphosphate binding site. Residue R122 coordinates isopentenyl diphosphate. Residues K201, T202, and Q239 each contribute to the (2E)-geranyl diphosphate site. The short motif at 242–246 is the DDXXD motif element; sequence DDLLG. Residues K256 and K266 each contribute to the (2E)-geranyl diphosphate site.

This sequence belongs to the FPP/GGPP synthase family. The cofactor is Mg(2+).

The protein resides in the cytoplasm. It catalyses the reaction isopentenyl diphosphate + (2E)-geranyl diphosphate = (2E,6E)-farnesyl diphosphate + diphosphate. It functions in the pathway isoprenoid biosynthesis; farnesyl diphosphate biosynthesis; farnesyl diphosphate from geranyl diphosphate and isopentenyl diphosphate. Its function is as follows. Catalyzes the condensation of isopentenyl pyrophosphate (IPP) with geranyl diphosphate (GPP) to yield (2E,6E)-farnesyl diphosphate (E,E-FPP). May be used for squalene and possibly sterol biosynthesis. This Mycobacterium bovis (strain ATCC BAA-935 / AF2122/97) protein is (2E,6E)-farnesyl diphosphate synthase.